Reading from the N-terminus, the 217-residue chain is GTP-binding protein yptV2 (217 aa).

GTP is bound at residue 20–27 (GDSGVGKS). The short motif at 42 to 50 (FITTIGIDF) is the Effector region element. GTP contacts are provided by residues 68 to 72 (DTAGQ) and 126 to 129 (NKLD). Positions 198–217 (QPVRLTSGSPSPAQGKSCCR) are disordered. Polar residues predominate over residues 201 to 211 (RLTSGSPSPAQ). Residues Cys-215 and Cys-216 are each lipidated (S-geranylgeranyl cysteine).

Belongs to the small GTPase superfamily. Rab family.

It localises to the cell membrane. Protein transport. Probably involved in vesicular traffic. The polypeptide is GTP-binding protein yptV2 (YPTV2) (Volvox carteri (Green alga)).